The chain runs to 121 residues: Small ribosomal subunit protein uS13 (121 aa).

The interval 97–121 is disordered; sequence VRGQRTRTNARTRRGARKTVAGKKK. Over residues 100–121 the composition is skewed to basic residues; that stretch reads QRTRTNARTRRGARKTVAGKKK.

The protein belongs to the universal ribosomal protein uS13 family. As to quaternary structure, part of the 30S ribosomal subunit. Forms a loose heterodimer with protein S19. Forms two bridges to the 50S subunit in the 70S ribosome.

Functionally, located at the top of the head of the 30S subunit, it contacts several helices of the 16S rRNA. In the 70S ribosome it contacts the 23S rRNA (bridge B1a) and protein L5 of the 50S subunit (bridge B1b), connecting the 2 subunits; these bridges are implicated in subunit movement. Contacts the tRNAs in the A and P-sites. In Parasynechococcus marenigrum (strain WH8102), this protein is Small ribosomal subunit protein uS13.